The following is a 48-amino-acid chain: uncharacterized protein (48 aa).

Positions 1 to 48 are disordered; sequence MTKIPINIPATSGKIKFGITPSSNKSPSLSPSPSNGQLGGGRGYILEP. The span at 21–36 shows a compositional bias: low complexity; that stretch reads PSSNKSPSLSPSPSNG. Gly residues predominate over residues 37–48; the sequence is QLGGGRGYILEP.

This is an uncharacterized protein from Dictyostelium discoideum (Social amoeba).